A 1020-amino-acid polypeptide reads, in one-letter code: MATLSQPQSALPKTKIATTFGLSKDLKSPISVKVCYLECTRNNVSLVPLSTKFEDPTVFKKLSQIYKNSDLFVEIRVYDGKNNNLISTPVRTSYKAFNNKGRTWNQQLKLNIDYNQISIDAYLKFSICEIIDTKPSVFGVSYLSLFSHDSSTLRSGSHKIPVFMEDDPQYSKNIQYGTLIGLTDLEKRLIDYENGKYPRLNWLDKMVLPKVDATFLKTNNKDHDYYLYIELPQFEFPIVYSDIIYQIPTIEPITETTSKIPPDDTLNSNIIINSIDIPMATSHDPSIMKVYDPDFHITANNHLNPNATTFDPVELKYRKLERNIDNNTILDKELKPTPQLRDELLRIMIKPSNAESTDNEKNLIWKFRYYFSKNNSGNDPSNKSVKSFLPKFLRSINWENDYELDHTFKEIIPFYWNVDKLQIGDALELLGDYFNPYTLGKPTYQDDSMTSKSSKMKSDEKRFIKIYNNVCFLRKLAVERLKLANSEELLLYLLQLVQALKYEALIYEKSPPFCERSDQIEDNASSTLKSPLADFLIERAVENEKLGNFFYWYVKVENEDQLNNPHIDGPIKIYMDILNRYIELLKAHCHENRLPYYKHLKHQIWFIKKLTSLVELLRASFKKNEATAKKVEYLREYLANSGNELLKFPEPFPLPLDPSVMICGCYPEESSVFKSSLAPLKITLKTIEKKKHGHATSQLFGKRSRYGKYPLMFKIGDDLRQDQLVIQIIDLMDQLLKNENLDLKLTPYKILATSPISGLIQFVPNETLDSILSKTYPTSVTYSGGGETSDGPPSVSNNGILNYLRLHSQEQQSEEPISKSILSTNTSQSNTEIPVLPRQPKPTITSDLGVSPILMDNYVKSCAGYCVITYILGVGDRHLDNLLLSPNGKFWHADFGYILGRDPKPFPPLMKLPIQVIDGMGGLHHENYNVFKSYCFITYTTLRKNSNLILNLFQLMLDANIPDIQFDPSRVIEKVQEKFCLQMTEEEAILHFQNLINDSVNAFLPVVIDRLHSLAQYWRA.

Residues 49–210 (LSTKFEDPTV…NWLDKMVLPK (162 aa)) enclose the C2 PI3K-type domain. The PIK helical domain maps to 331–577 (DKELKPTPQL…DGPIKIYMDI (247 aa)). Positions 666–1004 (YPEESSVFKS…LINDSVNAFL (339 aa)) constitute a PI3K/PI4K catalytic domain. Residues 672 to 678 (VFKSSLA) are G-loop. Residues 873–881 (GVGDRHLDN) form a catalytic loop region. An activation loop region spans residues 892–913 (HADFGYILGRDPKPFPPLMKLP).

The protein belongs to the PI3/PI4-kinase family. Component of the autophagy-specific VPS34 PI3-kinase complex I composed of at least VPS15, VPS30, VPS34, and of the VPS34 PI3-kinase complex II composed of VPS15, VPS30, VPS34 and VPS38. Interacts with VMNA7. In terms of processing, autophosphorylated.

The protein localises to the golgi apparatus. It localises to the trans-Golgi network membrane. It is found in the endosome membrane. The enzyme catalyses a 1,2-diacyl-sn-glycero-3-phospho-(1D-myo-inositol) + ATP = a 1,2-diacyl-sn-glycero-3-phospho-(1D-myo-inositol-3-phosphate) + ADP + H(+). Its function is as follows. Multifunctional phosphatidylinositol 3-kinase involved in acidification of vacuoles, pH-dependent cell growth, and autophagocytosis. Plays an important role in protein transport and virulence. Component of the autophagy-specific VPS34 PI3-kinase complex I essential to recruit the ATG8-phosphatidylinositol conjugate and the ATG12-ATG5 conjugate to the pre-autophagosomal structure. Also involved in endosome-to-Golgi retrograde transport as part of the VPS34 PI3-kinase complex II. This second complex is required for the endosome-to-Golgi retrieval of PEP1 and KEX2, and the recruitment of VPS5 and VPS7, two components of the retromer complex, to endosomal membranes (probably through the synthesis of a specific pool of phosphatidylinositol 3-phosphate recruiting the retromer to the endosomes). Finally, it might also be involved in ethanol tolerance and cell wall integrity. The protein is Phosphatidylinositol 3-kinase VPS34 of Candida albicans (Yeast).